The chain runs to 315 residues: Tyrosine recombinase XerC (315 aa).

The Core-binding (CB) domain occupies M1–V103. In terms of domain architecture, Tyr recombinase spans E124–D306. Catalysis depends on residues R164, K188, H258, R261, and H284. The active-site O-(3'-phospho-DNA)-tyrosine intermediate is the Y293.

It belongs to the 'phage' integrase family. XerC subfamily. In terms of assembly, forms a cyclic heterotetrameric complex composed of two molecules of XerC and two molecules of XerD.

The protein localises to the cytoplasm. In terms of biological role, site-specific tyrosine recombinase, which acts by catalyzing the cutting and rejoining of the recombining DNA molecules. The XerC-XerD complex is essential to convert dimers of the bacterial chromosome into monomers to permit their segregation at cell division. It also contributes to the segregational stability of plasmids. In Chlamydia muridarum (strain MoPn / Nigg), this protein is Tyrosine recombinase XerC.